Consider the following 162-residue polypeptide: Probable chemoreceptor glutamine deamidase CheD (162 aa).

This sequence belongs to the CheD family.

It carries out the reaction L-glutaminyl-[protein] + H2O = L-glutamyl-[protein] + NH4(+). Its function is as follows. Probably deamidates glutamine residues to glutamate on methyl-accepting chemotaxis receptors (MCPs), playing an important role in chemotaxis. The sequence is that of Probable chemoreceptor glutamine deamidase CheD from Clostridium botulinum (strain ATCC 19397 / Type A).